Consider the following 273-residue polypeptide: Bis(5'-nucleosyl)-tetraphosphatase, symmetrical (273 aa).

This sequence belongs to the Ap4A hydrolase family.

It catalyses the reaction P(1),P(4)-bis(5'-adenosyl) tetraphosphate + H2O = 2 ADP + 2 H(+). Hydrolyzes diadenosine 5',5'''-P1,P4-tetraphosphate to yield ADP. The sequence is that of Bis(5'-nucleosyl)-tetraphosphatase, symmetrical from Aliivibrio salmonicida (strain LFI1238) (Vibrio salmonicida (strain LFI1238)).